We begin with the raw amino-acid sequence, 306 residues long: Pantothenate kinase (306 aa).

90-97 (GSVAVGKS) serves as a coordination point for ATP.

Belongs to the prokaryotic pantothenate kinase family.

The protein resides in the cytoplasm. The enzyme catalyses (R)-pantothenate + ATP = (R)-4'-phosphopantothenate + ADP + H(+). The protein operates within cofactor biosynthesis; coenzyme A biosynthesis; CoA from (R)-pantothenate: step 1/5. This chain is Pantothenate kinase, found in Listeria monocytogenes serotype 4a (strain HCC23).